A 310-amino-acid polypeptide reads, in one-letter code: HPr kinase/phosphorylase (310 aa).

Residues H138 and K159 contribute to the active site. Residue 153 to 160 (GDSGIGKS) coordinates ATP. S160 is a binding site for Mg(2+). D177 acts as the Proton acceptor; for phosphorylation activity. Proton donor; for dephosphorylation activity in catalysis. Residues 201-210 (LEIRGVGIID) form an important for the catalytic mechanism of both phosphorylation and dephosphorylation region. E202 lines the Mg(2+) pocket. R243 is a catalytic residue. The tract at residues 264 to 269 (PVKTGR) is important for the catalytic mechanism of dephosphorylation.

The protein belongs to the HPrK/P family. As to quaternary structure, homohexamer. Mg(2+) serves as cofactor.

The catalysed reaction is [HPr protein]-L-serine + ATP = [HPr protein]-O-phospho-L-serine + ADP + H(+). The enzyme catalyses [HPr protein]-O-phospho-L-serine + phosphate + H(+) = [HPr protein]-L-serine + diphosphate. Functionally, catalyzes the ATP- as well as the pyrophosphate-dependent phosphorylation of a specific serine residue in HPr, a phosphocarrier protein of the phosphoenolpyruvate-dependent sugar phosphotransferase system (PTS). HprK/P also catalyzes the pyrophosphate-producing, inorganic phosphate-dependent dephosphorylation (phosphorolysis) of seryl-phosphorylated HPr (P-Ser-HPr). The two antagonistic activities of HprK/P are regulated by several intracellular metabolites, which change their concentration in response to the absence or presence of rapidly metabolisable carbon sources (glucose, fructose, etc.) in the growth medium. Therefore, by controlling the phosphorylation state of HPr, HPrK/P is a sensor enzyme that plays a major role in the regulation of carbon metabolism and sugar transport: it mediates carbon catabolite repression (CCR), and regulates PTS-catalyzed carbohydrate uptake and inducer exclusion. In Streptococcus equi subsp. equi (strain 4047), this protein is HPr kinase/phosphorylase.